The chain runs to 292 residues: Nitrogenase iron protein (292 aa).

An ATP-binding site is contributed by glycine 8 to serine 15. A [4Fe-4S] cluster-binding site is contributed by cysteine 96. At arginine 99 the chain carries ADP-ribosylarginine; by dinitrogenase reductase ADP-ribosyltransferase. Cysteine 130 is a [4Fe-4S] cluster binding site.

It belongs to the NifH/BchL/ChlL family. Homodimer. [4Fe-4S] cluster serves as cofactor. Post-translationally, the reversible ADP-ribosylation of Arg-99 inactivates the nitrogenase reductase and regulates nitrogenase activity.

The catalysed reaction is N2 + 8 reduced [2Fe-2S]-[ferredoxin] + 16 ATP + 16 H2O = H2 + 8 oxidized [2Fe-2S]-[ferredoxin] + 2 NH4(+) + 16 ADP + 16 phosphate + 6 H(+). Functionally, the key enzymatic reactions in nitrogen fixation are catalyzed by the nitrogenase complex, which has 2 components: the iron protein and the molybdenum-iron protein. The protein is Nitrogenase iron protein of Synechococcus sp. (strain JA-3-3Ab) (Cyanobacteria bacterium Yellowstone A-Prime).